We begin with the raw amino-acid sequence, 206 residues long: Dephospho-CoA kinase (206 aa).

One can recognise a DPCK domain in the interval 4 to 204 (IVGLTGGIGS…QFYLQQAENK (201 aa)). ATP is bound at residue 12–17 (GSGKTT).

Belongs to the CoaE family.

It localises to the cytoplasm. It carries out the reaction 3'-dephospho-CoA + ATP = ADP + CoA + H(+). The protein operates within cofactor biosynthesis; coenzyme A biosynthesis; CoA from (R)-pantothenate: step 5/5. Functionally, catalyzes the phosphorylation of the 3'-hydroxyl group of dephosphocoenzyme A to form coenzyme A. This Haemophilus influenzae (strain 86-028NP) protein is Dephospho-CoA kinase.